The primary structure comprises 361 residues: S-adenosylmethionine decarboxylase proenzyme (361 aa).

Residues Glu-13 and Glu-16 contribute to the active site. The active-site Schiff-base intermediate with substrate; via pyruvic acid is Ser-73. Position 73 is a pyruvic acid (Ser); by autocatalysis (Ser-73). Cys-87 functions as the Proton donor; for catalytic activity in the catalytic mechanism. Active-site proton acceptor; for processing activity residues include Ser-236 and His-249.

Belongs to the eukaryotic AdoMetDC family. Pyruvate serves as cofactor. Is synthesized initially as an inactive proenzyme. Formation of the active enzyme involves a self-maturation process in which the active site pyruvoyl group is generated from an internal serine residue via an autocatalytic post-translational modification. Two non-identical subunits are generated from the proenzyme in this reaction, and the pyruvate is formed at the N-terminus of the alpha chain, which is derived from the carboxyl end of the proenzyme. The post-translation cleavage follows an unusual pathway, termed non-hydrolytic serinolysis, in which the side chain hydroxyl group of the serine supplies its oxygen atom to form the C-terminus of the beta chain, while the remainder of the serine residue undergoes an oxidative deamination to produce ammonia and the pyruvoyl group blocking the N-terminus of the alpha chain.

It catalyses the reaction S-adenosyl-L-methionine + H(+) = S-adenosyl 3-(methylsulfanyl)propylamine + CO2. It participates in amine and polyamine biosynthesis; S-adenosylmethioninamine biosynthesis; S-adenosylmethioninamine from S-adenosyl-L-methionine: step 1/1. This chain is S-adenosylmethionine decarboxylase proenzyme (SAMDC), found in Nicotiana tabacum (Common tobacco).